Here is a 983-residue protein sequence, read N- to C-terminus: Alanine--tRNA ligase, mitochondrial (983 aa).

The N-terminal 24 residues, 1-24 (MTSTTGLRNLTLSFKKQLTTSTRT), are a transit peptide targeting the mitochondrion. Serine 504 is subject to Phosphoserine. The Zn(2+) site is built by histidine 625, histidine 629, cysteine 744, and histidine 748. A Phosphoserine modification is found at serine 975.

This sequence belongs to the class-II aminoacyl-tRNA synthetase family. Monomer. It depends on Zn(2+) as a cofactor.

Its subcellular location is the cytoplasm. It is found in the mitochondrion. It catalyses the reaction tRNA(Ala) + L-alanine + ATP = L-alanyl-tRNA(Ala) + AMP + diphosphate. Its function is as follows. Catalyzes the attachment of alanine to tRNA(Ala) in a two-step reaction: alanine is first activated by ATP to form Ala-AMP and then transferred to the acceptor end of tRNA(Ala). Also edits incorrectly charged tRNA(Ala) via its editing domain. This Saccharomyces cerevisiae (strain ATCC 204508 / S288c) (Baker's yeast) protein is Alanine--tRNA ligase, mitochondrial.